The chain runs to 510 residues: ETS translocation variant 5 (510 aa).

The tract at residues 132–245 is disordered; it reads KPLTPPATPL…PGDSRPSYHR (114 aa). The span at 163–174 shows a compositional bias: low complexity; it reads TPGAGPVQGVGP. A compositionally biased stretch (polar residues) spans 211-224; the sequence is QYPSEQRFQRQLSE. Ser-248 bears the Phosphoserine mark. Lys-350 is covalently cross-linked (Glycyl lysine isopeptide (Lys-Gly) (interchain with G-Cter in SUMO2)). The ETS DNA-binding region spans 368-448; that stretch reads LQLWQFLVTL…AGERYVYKFV (81 aa).

Belongs to the ETS family. Interacts (via C-terminal) with ZMYM5 (via N-terminal 120 amino acid region). In the brain, expressed predominantly in the cerebral cortex, the amygdala and the hypothalamus. Within the cerebral cortex, there is conspicuously high expression in cortical layers 2, 4 and 6 while expression is almost absent from layers 1, 3 and 5. High expression is also observed in the dorsal and ventral endopiriform claustrum. Strong expression is observed in limited parts of the amygdala including the basolateral amygdaloid nucleus, the bed stria terminalis and the central amygdaloid nucleus. Low to moderate levels are found in the hypothalamus while expression is almost absent in the thalamus. Hypothalamic expression is seen in the dorsomedial hypothalamic nucleus and also the central, dorsomedial and ventrolateral parts of the ventromedial hypothalamic nucleus. Strong expression is also identified in the nigrostriatal tract. In the mesencephalon, expression is restricted to the ventral tegmental area including the parabrachial pigmented nucleus. In the hippocampus, strongly expressed in the pyramidal cell layer. Some expression is also found in the lacunosum moleculare layer. Low levels of expression in the cerebellum, including the granular, molecular and Purkinje cell layers.

It localises to the nucleus. Binds to DNA sequences containing the consensus nucleotide core sequence 5'-GGAA.-3'. The protein is ETS translocation variant 5 (Etv5) of Mus musculus (Mouse).